The primary structure comprises 108 residues: UPF0060 membrane protein SAR2425 (108 aa).

Transmembrane regions (helical) follow at residues I5–W25, S31–F51, V60–D80, and K86–S106.

It belongs to the UPF0060 family.

The protein resides in the cell membrane. The polypeptide is UPF0060 membrane protein SAR2425 (Staphylococcus aureus (strain MRSA252)).